We begin with the raw amino-acid sequence, 268 residues long: Tryptophan synthase alpha chain (268 aa).

Active-site proton acceptor residues include Glu-49 and Asp-60.

This sequence belongs to the TrpA family. As to quaternary structure, tetramer of two alpha and two beta chains.

It catalyses the reaction (1S,2R)-1-C-(indol-3-yl)glycerol 3-phosphate + L-serine = D-glyceraldehyde 3-phosphate + L-tryptophan + H2O. Its pathway is amino-acid biosynthesis; L-tryptophan biosynthesis; L-tryptophan from chorismate: step 5/5. Its function is as follows. The alpha subunit is responsible for the aldol cleavage of indoleglycerol phosphate to indole and glyceraldehyde 3-phosphate. In Xylella fastidiosa (strain M23), this protein is Tryptophan synthase alpha chain.